The sequence spans 250 residues: 7-cyano-7-deazaguanine synthase (250 aa).

28 to 38 is an ATP binding site; that stretch reads LSGGLDSATCV. Residues Cys213, Cys226, Cys229, and Cys232 each coordinate Zn(2+).

Belongs to the QueC family. It depends on Zn(2+) as a cofactor.

The catalysed reaction is 7-carboxy-7-deazaguanine + NH4(+) + ATP = 7-cyano-7-deazaguanine + ADP + phosphate + H2O + H(+). It participates in purine metabolism; 7-cyano-7-deazaguanine biosynthesis. Functionally, catalyzes the ATP-dependent conversion of 7-carboxy-7-deazaguanine (CDG) to 7-cyano-7-deazaguanine (preQ(0)). The sequence is that of 7-cyano-7-deazaguanine synthase from Rhodopirellula baltica (strain DSM 10527 / NCIMB 13988 / SH1).